A 104-amino-acid polypeptide reads, in one-letter code: Protein MGF 300-3L (104 aa).

The protein belongs to the asfivirus MGF 300 family.

Plays a role in virus cell tropism, and may be required for efficient virus replication in macrophages. In African swine fever virus (isolate Tick/Malawi/Lil 20-1/1983) (ASFV), this protein is Protein MGF 300-3L.